Consider the following 1042-residue polypeptide: MALVTLQRSPTPSAASSSASNSELEAGSDEERKLNLSLSESFFMVKGAALFLQQGNSPQGQRSLQHPHKHAGDLPQHLQVMINLLRCEDRIKLAVRLESVWTDRVRYMVVVYTSGRQDTEENILLGVDFSSKESKSCTIGMVLRLWSDTKIHLDGDGGFSVSTAGRMHIFKPVSVQAMWSALQVLHKACEVARRHNYFPGGVALIWATYYESCISSEQSCINEWNAMQDLESTRPDSPALFVDKPTEGERTERLIKAKLRSIMMSQDLENVTSKEIRNELEKQMNCNLKEFKEFIDNEMLLILGQMDKPSLIFDHLYLGSEWNASNLEELQGSGVDYILNVTREIDNFFPGLFAYHNIRVYDEETTDLLAHWNEAYHFINKAKRNHSKCLVHCKMGVSRSASTVIAYAMKEFGWPLEKAYNYVKQKRSITRPNAGFMRQLSEYEGILDASKQRHNKLWRQQPTDDTIAEPSEFLPETLDGALDAQLPCLDDTTHPGLPRSLAPGGPALPCCFRRLSDPLLLPHHDETGGLVHLEDLEKDALLEEEESQPVEVHKLVQHPQEGARLCEKDVKRKLEFGNSKPRSDSLPQVEELEKDGSPRTGRWRRASTQLDRSLLDQENLNNNNSKRSCPDDLERDAMFGILSKVKPPYTSCADCMYPTAGGTPEAYMERHEDPSSSAICTQPTFLPHVTSSPMAHASSRSRAPERPASGPANTSPFLLPAGSRKPDVSGSGAGAAPEPPASLLEPSRETSKALPKSLQLKNPHCDKNAANMEVSAKEEPSPKKDPKPAKDLRLLFSNEAEKPTTNSYLMQHQESIIQLQKAGLVRKHTKELERLKSLPSDSPAACRDSATCRLEASIPEEGSQEPAHPALCSQAGSEEQPVGGTLQKSPTSTLPRLDHTSNFSKDFLKTVCYTPTSSSISSNLTRSSSSDSIHSVRGKPGLVKQRAQEIETRLRLAGLTVSSPLKRSHSLAKLGSLNFSTEDLSSEADTSTIADSQDAKCGLSSSFLPEPQSAPRDPAATSKSSGKSAPEHLKSPSRVNKS.

The segment covering 1-12 (MALVTLQRSPTP) has biased composition (polar residues). The tract at residues 1-29 (MALVTLQRSPTPSAASSSASNSELEAGSD) is disordered. Ala-2 is modified (N-acetylalanine). The segment covering 13–22 (SAASSSASNS) has biased composition (low complexity). Phosphoserine occurs at positions 37 and 57. The DEK-C domain occupies 249–304 (ERTERLIKAKLRSIMMSQDLENVTSKEIRNELEKQMNCNLKEFKEFIDNEMLLILG). Residues 308–449 (KPSLIFDHLY…LSEYEGILDA (142 aa)) enclose the Tyrosine-protein phosphatase domain. The active-site Phosphocysteine intermediate is Cys-393. Ser-516 bears the Phosphoserine mark. 4 disordered regions span residues 576–609 (FGNS…ASTQ), 668–766 (MERH…PHCD), 858–900 (IPEE…LDHT), and 915–942 (PTSS…KPGL). The span at 675–693 (SSSAICTQPTFLPHVTSSP) shows a compositional bias: polar residues. Residues 697-712 (ASSRSRAPERPASGPA) are compositionally biased toward low complexity. The segment covering 886–900 (LQKSPTSTLPRLDHT) has biased composition (polar residues). Ser-889 is modified (phosphoserine). Residues 889 to 1042 (SPTSTLPRLD…LKSPSRVNKS (154 aa)) form an interaction with YWHAG region. Low complexity predominate over residues 917 to 935 (SSSISSNLTRSSSSDSIHS). Ser-970 is subject to Phosphoserine. The segment covering 985-995 (SSEADTSTIAD) has biased composition (polar residues). The tract at residues 985-1042 (SSEADTSTIADSQDAKCGLSSSFLPEPQSAPRDPAATSKSSGKSAPEHLKSPSRVNKS) is disordered.

The protein belongs to the protein-tyrosine phosphatase family. As to quaternary structure, interacts with the 14-3-3 proteins YWHAB, YWHAG, YWHAQ, and YWHAZ. Interaction with 14-3-3 proteins inhibits phosphatase activity and also blocks recruitment to lamellipodia and stimulation by actin. Interacts with actin and this stimulates phosphatase activity. Interacts with LIMK1. Post-translationally, phosphorylated. Inhibitory phosphorylation by PAK4 promotes binding to YWHAZ. Phosphorylation at Ser-970 is decreased by stimuli which promote actin reorganization and lamellipodia formation. Can be dephosphorylated and activated by PPP3CA/calcineurin A. Phosphorylation decreases immediately prior to telophase. Expressed in brain, heart, kidney and thymus. Also expressed at lower levels in liver, skeletal muscle, small intestine and spleen.

It is found in the cytoplasm. The protein resides in the cytoskeleton. The protein localises to the cleavage furrow. Its subcellular location is the midbody. It carries out the reaction O-phospho-L-tyrosyl-[protein] + H2O = L-tyrosyl-[protein] + phosphate. The enzyme catalyses O-phospho-L-seryl-[protein] + H2O = L-seryl-[protein] + phosphate. It catalyses the reaction O-phospho-L-threonyl-[protein] + H2O = L-threonyl-[protein] + phosphate. Functionally, protein phosphatase which regulates actin filament dynamics. Dephosphorylates and activates the actin binding/depolymerizing factor cofilin, which subsequently binds to actin filaments and stimulates their disassembly. Inhibitory phosphorylation of cofilin is mediated by LIMK1, which may also be dephosphorylated and inactivated by this protein. The chain is Protein phosphatase Slingshot homolog 1 from Mus musculus (Mouse).